Consider the following 440-residue polypeptide: Probable exopolygalacturonase C (440 aa).

The first 19 residues, 1–19 (MSVFKASFLFLLSSSLVHG), serve as a signal peptide directing secretion. Asn-82 and Asn-99 each carry an N-linked (GlcNAc...) asparagine glycan. 3 PbH1 repeats span residues 215–236 (GTNIQITDSIMYNGDDAIAVGA), 238–259 (SHDTLFTRNTIGYQTHGMSIGS), and 265–288 (TDFANISNIRFDDVTVVDGLYAAR). The Proton donor role is filled by Asp-229. Residue His-253 is part of the active site. Residues Asn-269, Asn-301, Asn-311, and Asn-334 are each glycosylated (N-linked (GlcNAc...) asparagine). An intrachain disulfide couples Cys-387 to Cys-393. 2 N-linked (GlcNAc...) asparagine glycosylation sites follow: Asn-417 and Asn-432.

This sequence belongs to the glycosyl hydrolase 28 family.

The protein localises to the secreted. It carries out the reaction [(1-&gt;4)-alpha-D-galacturonosyl](n) + H2O = alpha-D-galacturonate + [(1-&gt;4)-alpha-D-galacturonosyl](n-1). Its function is as follows. Specific in hydrolyzing the terminal glycosidic bond of polygalacturonic acid and oligogalacturonates. In Aspergillus niger (strain ATCC MYA-4892 / CBS 513.88 / FGSC A1513), this protein is Probable exopolygalacturonase C (pgxC).